The sequence spans 280 residues: Large ribosomal subunit protein uL2cz/uL2cy (280 aa).

2 disordered regions span residues 1–25 (MAIH…VKSN) and 231–280 (PVDH…RRTK).

The protein belongs to the universal ribosomal protein uL2 family. In terms of assembly, part of the 50S ribosomal subunit.

Its subcellular location is the plastid. It is found in the chloroplast. The protein is Large ribosomal subunit protein uL2cz/uL2cy (rpl2-A) of Platanus occidentalis (Sycamore).